We begin with the raw amino-acid sequence, 337 residues long: Probable sulfurtransferase (337 aa).

Residue G83 coordinates ATP. C172 and C175 together coordinate [4Fe-4S] cluster. Residues K179 and G206 each coordinate ATP. C284 contributes to the [4Fe-4S] cluster binding site.

The protein belongs to the TtcA family. [4Fe-4S] cluster serves as cofactor. Requires Mg(2+) as cofactor.

The protein is Probable sulfurtransferase of Methanocaldococcus jannaschii (strain ATCC 43067 / DSM 2661 / JAL-1 / JCM 10045 / NBRC 100440) (Methanococcus jannaschii).